The sequence spans 130 residues: Small ribosomal subunit protein uS8 (130 aa).

It belongs to the universal ribosomal protein uS8 family. In terms of assembly, part of the 30S ribosomal subunit.

One of the primary rRNA binding proteins, it binds directly to 16S rRNA central domain where it helps coordinate assembly of the platform of the 30S subunit. In Methanosphaera stadtmanae (strain ATCC 43021 / DSM 3091 / JCM 11832 / MCB-3), this protein is Small ribosomal subunit protein uS8.